A 173-amino-acid polypeptide reads, in one-letter code: C-phycocyanin beta subunit (173 aa).

The residue at position 73 (asparagine 73) is an N4-methylasparagine. (2R,3E)-phycocyanobilin is bound by residues cysteine 83 and cysteine 154.

Belongs to the phycobiliprotein family. Heterodimer of an alpha and a beta subunit, which further assembles into trimers and the trimers into hexamers. Contains two covalently linked bilin chromophores.

It localises to the cellular thylakoid membrane. Its function is as follows. Light-harvesting photosynthetic bile pigment-protein from the phycobiliprotein complex (phycobilisome, PBS). Phycocyanin is the major phycobiliprotein in the PBS rod. The polypeptide is C-phycocyanin beta subunit (cpcB1) (Synechococcus elongatus (strain ATCC 33912 / PCC 7942 / FACHB-805) (Anacystis nidulans R2)).